Reading from the N-terminus, the 307-residue chain is Elongation factor Ts (307 aa).

Residues 80–83 (TDFV) are involved in Mg(2+) ion dislocation from EF-Tu.

It belongs to the EF-Ts family.

The protein localises to the cytoplasm. Associates with the EF-Tu.GDP complex and induces the exchange of GDP to GTP. It remains bound to the aminoacyl-tRNA.EF-Tu.GTP complex up to the GTP hydrolysis stage on the ribosome. The protein is Elongation factor Ts of Rhodospirillum centenum (strain ATCC 51521 / SW).